A 467-amino-acid polypeptide reads, in one-letter code: ATP synthase subunit beta (467 aa).

Residue 154 to 161 (GGAGVGKT) coordinates ATP.

This sequence belongs to the ATPase alpha/beta chains family. As to quaternary structure, F-type ATPases have 2 components, CF(1) - the catalytic core - and CF(0) - the membrane proton channel. CF(1) has five subunits: alpha(3), beta(3), gamma(1), delta(1), epsilon(1). CF(0) has three main subunits: a(1), b(2) and c(9-12). The alpha and beta chains form an alternating ring which encloses part of the gamma chain. CF(1) is attached to CF(0) by a central stalk formed by the gamma and epsilon chains, while a peripheral stalk is formed by the delta and b chains.

It localises to the cell inner membrane. It carries out the reaction ATP + H2O + 4 H(+)(in) = ADP + phosphate + 5 H(+)(out). In terms of biological role, produces ATP from ADP in the presence of a proton gradient across the membrane. The catalytic sites are hosted primarily by the beta subunits. This is ATP synthase subunit beta from Leptospira interrogans serogroup Icterohaemorrhagiae serovar copenhageni (strain Fiocruz L1-130).